The sequence spans 152 residues: Ribonuclease pancreatic gamma-type (152 aa).

The N-terminal stretch at 1-25 (MGLEKSFILFSLLVLVLGCVQPSLV) is a signal peptide. Positions 26 to 48 (GESKESPSEKFKRRHMDEEGPYQ) are disordered. Basic and acidic residues predominate over residues 27-43 (ESKESPSEKFKRRHMDE). Positions 35 and 38 each coordinate substrate. Histidine 40 (proton acceptor) is an active-site residue. Disulfide bonds link cysteine 54/cysteine 112, cysteine 68/cysteine 123, cysteine 86/cysteine 138, and cysteine 93/cysteine 100. Substrate-binding positions include 69–73 (KPLNT) and lysine 94. Residue histidine 147 is the Proton donor of the active site.

The protein belongs to the pancreatic ribonuclease family. Monomer.

Its subcellular location is the secreted. It carries out the reaction an [RNA] containing cytidine + H2O = an [RNA]-3'-cytidine-3'-phosphate + a 5'-hydroxy-ribonucleotide-3'-[RNA].. It catalyses the reaction an [RNA] containing uridine + H2O = an [RNA]-3'-uridine-3'-phosphate + a 5'-hydroxy-ribonucleotide-3'-[RNA].. Its function is as follows. Endonuclease that catalyzes the cleavage of RNA on the 3' side of pyrimidine nucleotides. Acts on single-stranded and double-stranded RNA. In Rattus fuscipes (Bush rat), this protein is Ribonuclease pancreatic gamma-type.